The primary structure comprises 378 residues: N-acetyldiaminopimelate deacetylase (378 aa).

Asp65 is a catalytic residue. The active-site Proton acceptor is Glu124.

The protein belongs to the peptidase M20A family. N-acetyldiaminopimelate deacetylase subfamily.

The catalysed reaction is N-acetyl-(2S,6S)-2,6-diaminopimelate + H2O = (2S,6S)-2,6-diaminopimelate + acetate. The protein operates within amino-acid biosynthesis; L-lysine biosynthesis via DAP pathway; LL-2,6-diaminopimelate from (S)-tetrahydrodipicolinate (acetylase route): step 3/3. In terms of biological role, catalyzes the conversion of N-acetyl-diaminopimelate to diaminopimelate and acetate. In Anoxybacillus flavithermus (strain DSM 21510 / WK1), this protein is N-acetyldiaminopimelate deacetylase.